A 399-amino-acid polypeptide reads, in one-letter code: PCI domain-containing protein 2 (399 aa).

A PCI domain is found at 210–391 (VTFKYYVGRK…QKLVVSKQNP (182 aa)).

This sequence belongs to the CSN12 family.

The chain is PCI domain-containing protein 2 (pcid2) from Xenopus laevis (African clawed frog).